We begin with the raw amino-acid sequence, 208 residues long: Endoplasmic reticulum vesicle protein 25 (208 aa).

The first 15 residues, 1 to 15, serve as a signal peptide directing secretion; that stretch reads MKFLLLLLLAPFISA. Residues 16–177 are Lumenal-facing; that stretch reads LRFDLKAESK…TNESTNERVR (162 aa). The GOLD domain maps to 28–118; it reads QMCIRDFVSE…KRAIELDIES (91 aa). Residues 178 to 198 form a helical membrane-spanning segment; the sequence is NFSVLVIIVLTSLGAWQVNYL. Topologically, residues 199–208 are cytoplasmic; it reads KNYFKSKHII.

It belongs to the EMP24/GP25L family.

It localises to the endoplasmic reticulum membrane. It is found in the golgi apparatus membrane. In terms of biological role, constituent of COPII-coated endoplasmic reticulum-derived transport vesicles. Required for efficient transport of a subset of secretory proteins to the Golgi. Facilitates retrograde transport from the Golgi to the endoplasmic reticulum. In Candida glabrata (strain ATCC 2001 / BCRC 20586 / JCM 3761 / NBRC 0622 / NRRL Y-65 / CBS 138) (Yeast), this protein is Endoplasmic reticulum vesicle protein 25 (ERV25).